The following is a 467-amino-acid chain: Ribulose bisphosphate carboxylase large chain (467 aa).

Lysine 6 carries the post-translational modification N6,N6,N6-trimethyllysine. The substrate site is built by asparagine 115 and threonine 165. The active-site Proton acceptor is the lysine 167. Residue lysine 169 participates in substrate binding. Lysine 193, aspartate 195, and glutamate 196 together coordinate Mg(2+). At lysine 193 the chain carries N6-carboxylysine. The active-site Proton acceptor is the histidine 286. 3 residues coordinate substrate: arginine 287, histidine 319, and serine 371.

The protein belongs to the RuBisCO large chain family. Type I subfamily. Heterohexadecamer of 8 large chains and 8 small chains; disulfide-linked. The disulfide link is formed within the large subunit homodimers. Requires Mg(2+) as cofactor. Post-translationally, the disulfide bond which can form in the large chain dimeric partners within the hexadecamer appears to be associated with oxidative stress and protein turnover.

It is found in the plastid. The protein localises to the chloroplast. It carries out the reaction 2 (2R)-3-phosphoglycerate + 2 H(+) = D-ribulose 1,5-bisphosphate + CO2 + H2O. The catalysed reaction is D-ribulose 1,5-bisphosphate + O2 = 2-phosphoglycolate + (2R)-3-phosphoglycerate + 2 H(+). RuBisCO catalyzes two reactions: the carboxylation of D-ribulose 1,5-bisphosphate, the primary event in carbon dioxide fixation, as well as the oxidative fragmentation of the pentose substrate in the photorespiration process. Both reactions occur simultaneously and in competition at the same active site. This is Ribulose bisphosphate carboxylase large chain from Cedrus atlantica (Atlas cedar).